A 313-amino-acid polypeptide reads, in one-letter code: MARWRPDMAEREATPEALYLRRRDFLALGAAGAVGLLLPRGARAGDPTGAALQVARKVDQAGGETPTPWDSVTGYNNFYELGTSKEDPSRNAGSLRARPWTVTIAGEVKRPQTLDVDALVRMFPPEERVYRMRCVEAWSMVIPWVGFPLADLVRRLEPTSRAKYVAFQTLLDRDQLPGQRRPVLPWPYVEALRIDEANHPLALLAVGLYGRVLPGQNGAPLRLVVPWKYGFKGAKSIVRITFLADRPHTTWNDAAPDEYGFYANVNPEVDHPRWSQARERRIGEFFRRKTLPFNGYAAEVAPLYAGLDLRKNY.

Positions 1–44 (MARWRPDMAEREATPEALYLRRRDFLALGAAGAVGLLLPRGARA) form a signal peptide, tat-type signal. Mo-molybdopterin is bound by residues Asn76, 79 to 80 (YE), Cys134, Thr169, Asn217, Arg222, and 233 to 235 (GAK).

This sequence belongs to the MsrP family. In terms of assembly, heterodimer of a catalytic subunit (MsrP) and a heme-binding subunit (MsrQ). Mo-molybdopterin serves as cofactor. Post-translationally, predicted to be exported by the Tat system. The position of the signal peptide cleavage has not been experimentally proven.

It is found in the periplasm. The catalysed reaction is L-methionyl-[protein] + a quinone + H2O = L-methionyl-(S)-S-oxide-[protein] + a quinol. It catalyses the reaction L-methionyl-[protein] + a quinone + H2O = L-methionyl-(R)-S-oxide-[protein] + a quinol. Functionally, part of the MsrPQ system that repairs oxidized periplasmic proteins containing methionine sulfoxide residues (Met-O), using respiratory chain electrons. Thus protects these proteins from oxidative-stress damage caused by reactive species of oxygen and chlorine generated by the host defense mechanisms. MsrPQ is essential for the maintenance of envelope integrity under bleach stress, rescuing a wide series of structurally unrelated periplasmic proteins from methionine oxidation. The catalytic subunit MsrP is non-stereospecific, being able to reduce both (R-) and (S-) diastereoisomers of methionine sulfoxide. The protein is Protein-methionine-sulfoxide reductase catalytic subunit MsrP of Anaeromyxobacter dehalogenans (strain 2CP-1 / ATCC BAA-258).